Reading from the N-terminus, the 142-residue chain is Hemoglobin subunit alpha (142 aa).

A Globin domain is found at 2–142; sequence VLSDANKQEI…LVHQLSSKYR (141 aa). His60 is an O2 binding site. His89 contributes to the heme b binding site.

The protein belongs to the globin family. Heterotetramer of two alpha chains and two beta chains. Red blood cells.

In terms of biological role, involved in oxygen transport from gills to the various peripheral tissues. This chain is Hemoglobin subunit alpha (HBA), found in Bathyraja eatonii (Eaton's skate).